Reading from the N-terminus, the 229-residue chain is Aldehyde oxidoreductase iron-sulfur-binding subunit PaoA (229 aa).

Positions 1-21 are disordered; it reads MSNQGEYPEDNRVGKHEPHDL. A signal peptide (tat-type signal) is located at residues 1-53; sequence MSNQGEYPEDNRVGKHEPHDLSLTRRDLIKVSAATAATAVVYPHSTLAASVPA. Residues 9-21 are compositionally biased toward basic and acidic residues; the sequence is EDNRVGKHEPHDL. In terms of domain architecture, 2Fe-2S ferredoxin-type spans 61 to 137; that stretch reads MPLTLKVNGK…GAEITTIEGL (77 aa). Cysteine 99, cysteine 104, glycine 105, cysteine 107, cysteine 119, cysteine 158, cysteine 161, cysteine 208, and cysteine 210 together coordinate [2Fe-2S] cluster.

As to quaternary structure, heterotrimer composed of PaoA, PaoB and PaoC. [2Fe-2S] cluster is required as a cofactor. In terms of processing, exported by the Tat system. The position of the signal peptide cleavage has not been experimentally proven.

It is found in the periplasm. The enzyme catalyses an aldehyde + A + H2O = a carboxylate + AH2 + H(+). Its activity is regulated as follows. The complex requires PaoD for activity. Oxidizes aldehydes to the corresponding carboxylic acids with a preference for aromatic aldehydes. It might play a role in the detoxification of aldehydes to avoid cell damage. This Escherichia coli (strain K12) protein is Aldehyde oxidoreductase iron-sulfur-binding subunit PaoA.